A 359-amino-acid polypeptide reads, in one-letter code: Protein-L-isoaspartate O-methyltransferase domain-containing protein 2 (359 aa).

Gly-2 carries N-myristoyl glycine lipidation. Residue Ser-64 is part of the active site. AdoMet binding motif stretches follow at residues 85–94 (LNLGSGTGYL), 160–164 (YDRVY), and 181–191 (LKVGGILVMPL). A BC-box region spans residues 240-250 (VRSLQDLARLA). The tract at residues 301–328 (SNPSDDTSCEDAEEDRREVAERTLQETK) is disordered. Positions 314 to 328 (EDRREVAERTLQETK) are enriched in basic and acidic residues. The tract at residues 343–346 (LPLP) is CUL-box.

The protein belongs to the methyltransferase superfamily. L-isoaspartyl/D-aspartyl protein methyltransferase family.

It localises to the cytoplasm. Its function is as follows. May act as a substrate recognition component of an ECS (Elongin BC-CUL5-SOCS-box protein) E3 ubiquitin ligase complex which mediates the ubiquitination and subsequent proteasomal degradation of target proteins. May bind to the methyltransferase cofactor S-adenosylmethionine (AdoMet) via the N-terminal AdoMet binding motif, but probably does not display methyltransferase activity. The chain is Protein-L-isoaspartate O-methyltransferase domain-containing protein 2 (Pcmtd2) from Mus musculus (Mouse).